The chain runs to 66 residues: Ocellatin-PT4 (66 aa).

An N-terminal signal peptide occupies residues 1–22 (MAFLKKSLFLVLFLGLVSLSIC). The propeptide occupies 23 to 39 (DEEKRQDEDDDDDDDEE). At V66 the chain carries Valine amide.

In terms of tissue distribution, expressed by the skin glands.

Its subcellular location is the secreted. Has antibacterial activity against Gram-negative bacteria E.coli ATCC 25922 (MIC=80 uM), K.pneumoniae ATCC 700603 (MIC=310 uM) and S.choleraesuis ATCC 14028 (MIC=310 uM). Shows no hemolytic activity and no cytotoxicity. This chain is Ocellatin-PT4, found in Leptodactylus pustulatus (Ceara white-lipped frog).